The sequence spans 249 residues: Triosephosphate isomerase (249 aa).

Residue 9–11 (NWK) coordinates substrate. His-95 acts as the Electrophile in catalysis. Glu-165 serves as the catalytic Proton acceptor. Residues Gly-171, Ser-211, and 232-233 (GG) each bind substrate.

Belongs to the triosephosphate isomerase family. As to quaternary structure, homodimer.

It localises to the cytoplasm. It catalyses the reaction D-glyceraldehyde 3-phosphate = dihydroxyacetone phosphate. It participates in carbohydrate biosynthesis; gluconeogenesis. The protein operates within carbohydrate degradation; glycolysis; D-glyceraldehyde 3-phosphate from glycerone phosphate: step 1/1. Involved in the gluconeogenesis. Catalyzes stereospecifically the conversion of dihydroxyacetone phosphate (DHAP) to D-glyceraldehyde-3-phosphate (G3P). In Chlorobium phaeobacteroides (strain DSM 266 / SMG 266 / 2430), this protein is Triosephosphate isomerase.